A 666-amino-acid polypeptide reads, in one-letter code: DEAD-box ATP-dependent RNA helicase 30 (666 aa).

The interval 53–102 is disordered; it reads PDPNLPRRLPFPSSSSTPTAAAPPDSGEPSRARARTETYRTGDMNPYDLR. Over residues 64–76 the composition is skewed to low complexity; the sequence is PSSSSTPTAAAPP. The segment covering 80–92 has biased composition (basic and acidic residues); the sequence is EPSRARARTETYR. A Q motif motif is present at residues 251–279; that stretch reads RYFQEANFPDYCMQAIAKSGFVEPTPIQS. Positions 282-457 constitute a Helicase ATP-binding domain; that stretch reads WPMALKGRDM…RQFLQNPYKV (176 aa). ATP is bound at residue 295 to 302; it reads AQTGSGKT. The DEAD box signature appears at 405 to 408; that stretch reads DEAD. The region spanning 485–630 is the Helicase C-terminal domain; sequence RLSKLLSDLM…VVNPALESMA (146 aa). Positions 632–666 are disordered; the sequence is SASSMGGGNFRSRGRGGFGNRSGSNSIPIRGRRPY. Positions 636 to 651 are enriched in gly residues; the sequence is MGGGNFRSRGRGGFGN.

This sequence belongs to the DEAD box helicase family. DDX5/DBP2 subfamily.

It is found in the nucleus. It carries out the reaction ATP + H2O = ADP + phosphate + H(+). Functionally, ATP-dependent RNA helicase involved nonsense-mediated mRNA decay and ribosome biogenesis through rRNA processing. This is DEAD-box ATP-dependent RNA helicase 30 from Oryza sativa subsp. japonica (Rice).